We begin with the raw amino-acid sequence, 388 residues long: Formate-dependent phosphoribosylglycinamide formyltransferase (388 aa).

Residues 11-12 (EL) and Glu-71 contribute to the N(1)-(5-phospho-beta-D-ribosyl)glycinamide site. Residues Arg-103, Lys-144, 149–154 (SSGKGQ), 184–187 (EEFI), and Glu-192 each bind ATP. An ATP-grasp domain is found at 108-300 (DLAAKELGLK…EFELHLRAVL (193 aa)). Residues Glu-257 and Glu-270 each coordinate Mg(2+). Residues Asp-277, Lys-349, and 356–357 (RR) contribute to the N(1)-(5-phospho-beta-D-ribosyl)glycinamide site.

It belongs to the PurK/PurT family. Homodimer.

The catalysed reaction is N(1)-(5-phospho-beta-D-ribosyl)glycinamide + formate + ATP = N(2)-formyl-N(1)-(5-phospho-beta-D-ribosyl)glycinamide + ADP + phosphate + H(+). It functions in the pathway purine metabolism; IMP biosynthesis via de novo pathway; N(2)-formyl-N(1)-(5-phospho-D-ribosyl)glycinamide from N(1)-(5-phospho-D-ribosyl)glycinamide (formate route): step 1/1. Its function is as follows. Involved in the de novo purine biosynthesis. Catalyzes the transfer of formate to 5-phospho-ribosyl-glycinamide (GAR), producing 5-phospho-ribosyl-N-formylglycinamide (FGAR). Formate is provided by PurU via hydrolysis of 10-formyl-tetrahydrofolate. The chain is Formate-dependent phosphoribosylglycinamide formyltransferase from Bacteroides thetaiotaomicron (strain ATCC 29148 / DSM 2079 / JCM 5827 / CCUG 10774 / NCTC 10582 / VPI-5482 / E50).